Here is a 552-residue protein sequence, read N- to C-terminus: Carotenoid cleavage dioxygenase 8 homolog A, chloroplastic (552 aa).

The transit peptide at Met1–Arg43 directs the protein to the chloroplast. A disordered region spans residues Ser32–Arg73. Over residues Ser59 to Val72 the composition is skewed to polar residues. Fe cation is bound by residues His239, His289, His356, and His543.

It belongs to the carotenoid oxygenase family. Fe(2+) is required as a cofactor. In terms of tissue distribution, highly expressed in panicles, inflorescences and parenchyma cells of the root stele, and at lower levels in shoot apex, leaf buds and xylem parenchyma cells of the stem.

It localises to the plastid. Its subcellular location is the chloroplast. May be involved in strigolactones biosynthesis. The protein is Carotenoid cleavage dioxygenase 8 homolog A, chloroplastic (CCD8A) of Oryza sativa subsp. japonica (Rice).